A 90-amino-acid polypeptide reads, in one-letter code: Probable Fe(2+)-trafficking protein (90 aa).

It belongs to the Fe(2+)-trafficking protein family.

In terms of biological role, could be a mediator in iron transactions between iron acquisition and iron-requiring processes, such as synthesis and/or repair of Fe-S clusters in biosynthetic enzymes. The chain is Probable Fe(2+)-trafficking protein from Chromohalobacter salexigens (strain ATCC BAA-138 / DSM 3043 / CIP 106854 / NCIMB 13768 / 1H11).